A 649-amino-acid polypeptide reads, in one-letter code: Transcription factor E2-alpha (649 aa).

5 disordered regions span residues 34 to 107 (GKGR…SERS), 127 to 206 (LPGE…SAKT), 222 to 267 (LHPS…GLQQ), 291 to 325 (SAAPGTYGGASGHTPPVSGADSLMGTRGTTASSSG), and 339 to 382 (DHSS…DGGL). Polar residues-rich tracts occupy residues 56 to 76 (SSGSWGNSDQNSSSFDPSRTY) and 85 to 94 (SHNSLPSSTF). The span at 127 to 143 (LPGELGLSSPGPLSPSG) shows a compositional bias: low complexity. 2 positions are modified to phosphoserine: Ser-135 and Ser-140. Over residues 145–156 (KSGSQYYPSYPS) the composition is skewed to polar residues. The Nuclear localization signal motif lies at 171–177 (SKKVRKV). Low complexity-rich tracts occupy residues 182 to 193 (PSSVYPSSSGDS) and 242 to 259 (GDGSSPLPLAPGSSSVGS). Over residues 339–352 (DHSSNNFSPSPSTP) the composition is skewed to low complexity. Thr-351 is subject to Phosphothreonine. Ser-355 is modified (phosphoserine). Residue Arg-367 is modified to Omega-N-methylarginine. At Ser-375 the chain carries Phosphoserine. The leucine-zipper stretch occupies residues 385-420 (LSKMEDRLDEAIHVLRSHAVGTASDLHGLLPGHGAL). The disordered stretch occupies residues 431-547 (GGRHAGLVGG…KAEREKERRV (117 aa)). Residues 448–469 (TSGTSLLHTHASLPSQASSLPD) show a composition bias toward polar residues. Lys-494 is covalently cross-linked (Glycyl lysine isopeptide (Lys-Gly) (interchain with G-Cter in SUMO2)). Phosphoserine is present on Ser-524. Glu-529 is modified (phosphothreonine). Residues 537 to 547 (QKAEREKERRV) show a composition bias toward basic and acidic residues. Residues 544–597 (ERRVANNARERLRVRDINEAFKELGRMCQLHLSSEKPQTKLLILHQAVAVILSL) enclose the bHLH domain. Residue Lys-620 forms a Glycyl lysine isopeptide (Lys-Gly) (interchain with G-Cter in SUMO2) linkage.

Homodimer. Heterodimer; efficient DNA binding requires dimerization with another bHLH protein. Forms a heterodimer with TWIST1 and TWIST2. Forms a heterodimer with NEUROD1; the heterodimer is inhibited in presence of ID2, but not NR0B2, to E-box element. Forms a heterodimer with TCF15; the heterodimer binds E-box element. Forms a heterodimer with MYOG; heterodimerization enhances MYOG DNA-binding and transcriptional activities. Forms a heterodimer with ATOH8; repress transcription of TCF3 and TCF3-NEUROG3 dimer-induced transactivation of E box-dependent promoters. Component of a nuclear TAL-1 complex composed at least of CBFA2T3, LDB1, TAL1 and TCF3. Interacts with NEUROD2. Interacts with EP300. Interacts with PTF1A, TGFB1I1 and UBE2I. Interacts with BHLHA9. Interacts with ASB2; the interaction is mediated by SKP2 and targets TCF3 for Notch-induced proteasomal degradation. Interacts with transcription factor ASCL5/AmeloD. In terms of assembly, interacts with RALGAPA1. Interacts with FIGLA. As to quaternary structure, forms a heterodimer with ATOH7; required for ATOH7 DNA-binding. Post-translationally, phosphorylated following NGF stimulation. Undergoes Notch-induced ubiquitination and subsequent proteasomal degradation which is mediated by ASB1 or ASB2, the substrate-recognition components of probable ECS E3 ubiquitin-protein ligase complexes.

Its subcellular location is the nucleus. Transcriptional regulator. Involved in the initiation of neuronal differentiation and mesenchymal to epithelial transition. Heterodimers between TCF3 and tissue-specific basic helix-loop-helix (bHLH) proteins play major roles in determining tissue-specific cell fate during embryogenesis, like muscle or early B-cell differentiation. Together with TCF15, required for the mesenchymal to epithelial transition. Dimers bind DNA on E-box motifs: 5'-CANNTG-3'. Binds to the kappa-E2 site in the kappa immunoglobulin gene enhancer. Binds to IEB1 and IEB2, which are short DNA sequences in the insulin gene transcription control region. Functionally, facilitates ATOH7 binding to DNA at the consensus sequence 5'-CAGGTG-3', and positively regulates transcriptional activity. This is Transcription factor E2-alpha (TCF3) from Mesocricetus auratus (Golden hamster).